We begin with the raw amino-acid sequence, 289 residues long: Fatty acid elongase 3-like (289 aa).

Transmembrane regions (helical) follow at residues 35–55, 75–95, 129–149, 157–176, 181–203, 205–225, and 248–268; these read SFLF…HILL, SLLM…SAAA, VFFW…RTIF, LAVS…FLWL, SYQI…YRFW, GFGL…LVLV, and IGAW…FLNF.

Belongs to the ELO family.

Its subcellular location is the membrane. Probable very long-chain fatty acid (VLCFA) elongase that controls VLCFA composition and functions to inhibit abscisic acid (ABA)-mediated stress responses, including regulation of stomatal aperture, maintenance of primary root growth and inhibition of germination. VLCFA pathway and products may function as signaling components acting upstream of sphingosine-1-phosphate, ceramide and the heterotrimeric G-protein complex, in lipid-mediated regulation of abiotic stress signaling. This chain is Fatty acid elongase 3-like (HOS3), found in Arabidopsis thaliana (Mouse-ear cress).